A 251-amino-acid chain; its full sequence is tRNA (guanine-N(1)-)-methyltransferase (251 aa).

Residues Gly-117 and 137-142 (IGDYVL) contribute to the S-adenosyl-L-methionine site.

The protein belongs to the RNA methyltransferase TrmD family. As to quaternary structure, homodimer.

It localises to the cytoplasm. The enzyme catalyses guanosine(37) in tRNA + S-adenosyl-L-methionine = N(1)-methylguanosine(37) in tRNA + S-adenosyl-L-homocysteine + H(+). In terms of biological role, specifically methylates guanosine-37 in various tRNAs. In Haemophilus ducreyi (strain 35000HP / ATCC 700724), this protein is tRNA (guanine-N(1)-)-methyltransferase.